A 256-amino-acid polypeptide reads, in one-letter code: MLNLENKTYVIMGIANKRSIAFGVAKVLDQLGAKLVFTYRKERSRKELEKLLEQLNQPEAHLYQIDVQSDEEVINGFEQIGKDVGNIDGVYHSIAFANMEDLRGRFSETSREGFLLAQDISSYSLTIVAHEAKKLMPEGGSIVATTYLGGEFAVQNYNVMGVAKASLEANVKYLALDLGPDNIRVNAISASPIRTLSAKGVGGFNTILKEIEERAPLKRNVDQVEVGKTAAYLLSDLSSGVTGENIHVDSGFHAIK.

NADP(+)-binding positions include Gly13, 19-20, 40-44, 66-67, and Ile94; these read SI, RKERS, and DV. A substrate-binding site is contributed by Ala97. Catalysis depends on proton acceptor residues Tyr147 and Tyr157. NADP(+) contacts are provided by residues Lys164 and 193–197; that span reads IRTLS.

It belongs to the short-chain dehydrogenases/reductases (SDR) family. FabI subfamily. In terms of assembly, homotetramer.

It catalyses the reaction a 2,3-saturated acyl-[ACP] + NADP(+) = a (2E)-enoyl-[ACP] + NADPH + H(+). Its pathway is lipid metabolism; fatty acid biosynthesis. Inhibited by 1,4-disubstituted imidazoles, 1,4-benzodiazepine, naphthyridinone derivatives, triclosan and its diphenyl ether analgues. Functionally, catalyzes the reduction of a carbon-carbon double bond in an enoyl moiety that is covalently linked to an acyl carrier protein (ACP). It has a preference for a long chain (C12) substrate compared to the shorter (C4) acyl group. Involved in the elongation cycle of fatty acid which are used in the lipid metabolism. This chain is Enoyl-[acyl-carrier-protein] reductase [NADPH] FabI (fabI), found in Staphylococcus aureus (strain NCTC 8325 / PS 47).